The following is a 322-amino-acid chain: Porphobilinogen deaminase (322 aa).

Residue Cys254 is modified to S-(dipyrrolylmethanemethyl)cysteine.

The protein belongs to the HMBS family. Monomer. Dipyrromethane serves as cofactor.

It carries out the reaction 4 porphobilinogen + H2O = hydroxymethylbilane + 4 NH4(+). Its pathway is porphyrin-containing compound metabolism; protoporphyrin-IX biosynthesis; coproporphyrinogen-III from 5-aminolevulinate: step 2/4. Functionally, tetrapolymerization of the monopyrrole PBG into the hydroxymethylbilane pre-uroporphyrinogen in several discrete steps. The chain is Porphobilinogen deaminase from Methylococcus capsulatus (strain ATCC 33009 / NCIMB 11132 / Bath).